The chain runs to 152 residues: Small ribosomal subunit protein bS16 (152 aa).

The tract at residues 84-152 is disordered; it reads WKWEASNNPQ…EAAAEEEKSE (69 aa). Residues 97-123 show a composition bias toward basic and acidic residues; it reads PGQKAKELAAEKAEKEADRKAAEEEAK. Residues 124 to 144 show a composition bias toward low complexity; it reads AAAAAPAAEEAPAEEAPAAEA.

The protein belongs to the bacterial ribosomal protein bS16 family.

This Maricaulis maris (strain MCS10) (Caulobacter maris) protein is Small ribosomal subunit protein bS16.